The sequence spans 152 residues: Large ribosomal subunit protein uL15 (152 aa).

The span at 1–12 shows a compositional bias: polar residues; that stretch reads MTSTLNTLKSNT. Residues 1–57 are disordered; sequence MTSTLNTLKSNTGSRKKKLRKGRGIAAGQGASCGFGMRGQKSRSGRPTRPGFEGGQM. Positions 14–23 are enriched in basic residues; it reads SRKKKLRKGR. Residues 25–37 show a composition bias toward gly residues; that stretch reads IAAGQGASCGFGM.

Belongs to the universal ribosomal protein uL15 family. In terms of assembly, part of the 50S ribosomal subunit.

Binds to the 23S rRNA. The polypeptide is Large ribosomal subunit protein uL15 (Prochlorococcus marinus subsp. pastoris (strain CCMP1986 / NIES-2087 / MED4)).